Reading from the N-terminus, the 411-residue chain is Carbohydrate sulfotransferase 1 (411 aa).

At 1–2 (MQ) the chain is on the cytoplasmic side. The helical; Signal-anchor for type II membrane protein transmembrane segment at 3–23 (CSWKAVLLLALASIAIQYTAI) threads the bilayer. Over 24–411 (RTFTAKSFHT…VEERDFRPFS (388 aa)) the chain is Lumenal. The N-linked (GlcNAc...) asparagine glycan is linked to asparagine 56. Position 69-75 (69-75 (TRSGSSF)) interacts with 3'-phosphoadenylyl sulfate. N-linked (GlcNAc...) asparagine glycans are attached at residues asparagine 145 and asparagine 189. A 3'-phosphoadenylyl sulfate-binding site is contributed by 234-242 (RDPRGILAS). N-linked (GlcNAc...) asparagine glycosylation occurs at asparagine 334. A Cell attachment site motif is present at residues 337–339 (RGD).

This sequence belongs to the sulfotransferase 1 family. Gal/GlcNAc/GalNAc subfamily. As to expression, widely expressed at low level. Expressed in brain and skeletal muscle. Expressed by high endothelial cells (HEVs) and leukocytes.

Its subcellular location is the golgi apparatus membrane. It carries out the reaction 3'-phosphoadenylyl sulfate + keratan = adenosine 3',5'-bisphosphate + keratan 6'-sulfate.. Its pathway is glycan metabolism. Sulfotransferase that utilizes 3'-phospho-5'-adenylyl sulfate (PAPS) as sulfonate donor to catalyze the transfer of sulfate to position 6 of internal galactose (Gal) residues of keratan. Cooperates with B4GALT4 and B3GNT7 glycosyltransferases and CHST6 sulfotransferase to construct and elongate disulfated disaccharide unit [-&gt;3(6-sulfoGalbeta)1-&gt;4(6-sulfoGlcNAcbeta)1-&gt;] within keratan sulfate polymer. Has a preference for sulfating keratan sulfate, but it also transfers sulfate to the unsulfated polymer. Involved in biosynthesis of phosphacan, a major keratan sulfate proteoglycan in the developing brain. Involved in biosynthesis of 6-sulfoGalbeta-containing O-linked glycans in high endothelial venules of lymph nodes. May act in a synergistic manner with CHST4 to generate sialyl 6',6-disulfo Lewis X motif, a recognition determinant for immune cell receptors implicated in leukocyte trafficking. Catalyzes sulfation of N-acetyllactosamine (LacNAc) oligosaccharides with highest efficiency for sialylated LacNAc structures. The protein is Carbohydrate sulfotransferase 1 of Homo sapiens (Human).